Consider the following 445-residue polypeptide: UDP-N-acetylmuramoylalanine--D-glutamate ligase (445 aa).

An ATP-binding site is contributed by 117-123 (GSNGKTT).

The protein belongs to the MurCDEF family.

It localises to the cytoplasm. It carries out the reaction UDP-N-acetyl-alpha-D-muramoyl-L-alanine + D-glutamate + ATP = UDP-N-acetyl-alpha-D-muramoyl-L-alanyl-D-glutamate + ADP + phosphate + H(+). Its pathway is cell wall biogenesis; peptidoglycan biosynthesis. Functionally, cell wall formation. Catalyzes the addition of glutamate to the nucleotide precursor UDP-N-acetylmuramoyl-L-alanine (UMA). The chain is UDP-N-acetylmuramoylalanine--D-glutamate ligase from Neisseria meningitidis serogroup C (strain 053442).